Here is a 363-residue protein sequence, read N- to C-terminus: MKVLAAMSGGVDSSVAAARMVDAGHDVVGVHLALSTAPGALRTGSRGCCSKEDASDARRVADVLGIPFYVWDFAERFKEDVIDDFVSSYARGETPNPCIRCNQRIKFSALYAKALALGFDVVVTGHYARLSEGRLRRAVDQDKDQSYVLAVLTAEQLRHAMFPIGDTPKPQIREEASRRGLAVADKPDSHDICFIPSGNTQTFLGERIGVRRGTVVDAAGAVLATHDGVHGFTIGQRKGLGIPGPGPDGRPRYVTAIDAETGTVRVGDVADLQVHALTGRAPIFTAGTAPTGPLECAVQVRAHGETTSAVAELVGDELSVRLHSPLRGVARGQTLVLYRPDPDGDEVLGSATITATSACSPVS.

ATP-binding positions include 6-13 (AMSGGVDS) and leucine 32. Cysteine 101 (nucleophile) is an active-site residue. A disulfide bridge links cysteine 101 with cysteine 193. Glycine 125 contributes to the ATP binding site. The interval 143–145 (KDQ) is interaction with tRNA. The Cysteine persulfide intermediate role is filled by cysteine 193.

Belongs to the MnmA/TRMU family.

It is found in the cytoplasm. The enzyme catalyses S-sulfanyl-L-cysteinyl-[protein] + uridine(34) in tRNA + AH2 + ATP = 2-thiouridine(34) in tRNA + L-cysteinyl-[protein] + A + AMP + diphosphate + H(+). Its function is as follows. Catalyzes the 2-thiolation of uridine at the wobble position (U34) of tRNA, leading to the formation of s(2)U34. The polypeptide is tRNA-specific 2-thiouridylase MnmA (Mycobacterium marinum (strain ATCC BAA-535 / M)).